The sequence spans 185 residues: UPF0149 protein XF_2010 (185 aa).

It belongs to the UPF0149 family.

This is UPF0149 protein XF_2010 from Xylella fastidiosa (strain 9a5c).